We begin with the raw amino-acid sequence, 330 residues long: Transcription factor TGA2 (330 aa).

The segment at 1 to 48 (MADTSPRTDVSTDDDTDHPDLGSEGALVNTAASDSSDRSKGKMDQKTL) is disordered. Basic and acidic residues predominate over residues 35-47 (SSDRSKGKMDQKT). A bZIP domain is found at 44–107 (DQKTLRRLAQ…GTGDQAHSTG (64 aa)). Coiled-coil stretches lie at residues 45 to 142 (QKTL…HAGD) and 217 to 244 (INNL…SLAD). Residues 46–66 (KTLRRLAQNREAARKSRLRKK) form a basic motif region. Positions 72-86 (LENSRLKLTQLEQEL) are leucine-zipper. In terms of domain architecture, DOG1 spans 111-327 (ALAFDAEHSR…RALSSLWLAR (217 aa)).

Belongs to the bZIP family. Binds DNA as a dimer. Interacts with NPR1, NPR3 and NPR4. Interacts with GRXC7/ROXY1 and GRXC9/GRX480. Expressed in the whole plant.

It localises to the nucleus. In terms of biological role, transcriptional activator that binds specifically to the DNA sequence 5'-TGACG-3'. Recognizes ocs elements like the as-1 motif of the cauliflower mosaic virus 35S promoter. Binding to the as-1-like cis elements mediate auxin- and salicylic acid-inducible transcription. Required to induce the systemic acquired resistance (SAR) via the regulation of pathogenesis-related genes expression. Binding to the as-1 element of PR-1 promoter is salicylic acid-inducible and mediated by NPR1. Could also bind to the C-boxes (5'-ATGACGTCAT-3') with high affinity. This is Transcription factor TGA2 (TGA2) from Arabidopsis thaliana (Mouse-ear cress).